Consider the following 175-residue polypeptide: Protein ppBat (175 aa).

2 residues coordinate Zn(2+): Cys74 and Cys111. Asn161 and Trp164 together coordinate riboflavin.

Homodimer.

Binds flavin derivatives, such as lumichrome, riboflavin, FMN, and FAD. May act as a flavin storage protein. Appears to lack proteolytic or chaperone activities. This Bacteroides thetaiotaomicron (strain ATCC 29148 / DSM 2079 / JCM 5827 / CCUG 10774 / NCTC 10582 / VPI-5482 / E50) protein is Protein ppBat.